A 371-amino-acid chain; its full sequence is Glutamate 5-kinase (371 aa).

K14 provides a ligand contact to ATP. Substrate-binding residues include S52, D139, and N151. 171 to 172 (SD) is a binding site for ATP. Positions 275–353 (EGRLHLDSGA…ADLAMELGPS (79 aa)) constitute a PUA domain.

This sequence belongs to the glutamate 5-kinase family.

Its subcellular location is the cytoplasm. The catalysed reaction is L-glutamate + ATP = L-glutamyl 5-phosphate + ADP. It participates in amino-acid biosynthesis; L-proline biosynthesis; L-glutamate 5-semialdehyde from L-glutamate: step 1/2. Its function is as follows. Catalyzes the transfer of a phosphate group to glutamate to form L-glutamate 5-phosphate. The sequence is that of Glutamate 5-kinase from Frankia casuarinae (strain DSM 45818 / CECT 9043 / HFP020203 / CcI3).